Reading from the N-terminus, the 157-residue chain is Endoribonuclease YbeY (157 aa).

Zn(2+)-binding residues include His-114, His-118, and His-124.

It belongs to the endoribonuclease YbeY family. Zn(2+) is required as a cofactor.

It is found in the cytoplasm. Single strand-specific metallo-endoribonuclease involved in late-stage 70S ribosome quality control and in maturation of the 3' terminus of the 16S rRNA. The polypeptide is Endoribonuclease YbeY (Salmonella typhimurium (strain LT2 / SGSC1412 / ATCC 700720)).